Reading from the N-terminus, the 398-residue chain is Cytochrome b (398 aa).

The next 4 membrane-spanning stretches (helical) occupy residues 33 to 53 (FGSL…FLAM), 77 to 98 (WLIR…YLHI), 113 to 133 (WNIG…GYVL), and 178 to 198 (FFAF…IHLL). Positions 83 and 97 each coordinate heme b. Heme b is bound by residues His-182 and His-196. An a ubiquinone-binding site is contributed by His-201. 4 helical membrane-spanning segments follow: residues 226–246 (YKDL…SLFA), 288–308 (LGGV…PILH), 320–340 (FTQL…WIGG), and 347–367 (YVVI…FLIP).

It belongs to the cytochrome b family. As to quaternary structure, the cytochrome bc1 complex contains 3 respiratory subunits (MT-CYB, CYC1 and UQCRFS1), 2 core proteins (UQCRC1 and UQCRC2) and probably 6 low-molecular weight proteins. The cofactor is heme b.

It is found in the mitochondrion inner membrane. Functionally, component of the ubiquinol-cytochrome c reductase complex (complex III or cytochrome b-c1 complex) that is part of the mitochondrial respiratory chain. The b-c1 complex mediates electron transfer from ubiquinol to cytochrome c. Contributes to the generation of a proton gradient across the mitochondrial membrane that is then used for ATP synthesis. This is Cytochrome b (mt-cyb) from Channa asiatica (Small snakehead).